The sequence spans 554 residues: MTPLIFVTGGVVSSLGKGIAAASLASILEARGLKVTMVKLDPYINVDPGTMSPFQHGEVYVTDDGAETDLDLGHYERFVRTRLSRKNSVTTGRIYQNVICKERRGDYLGATVQVIPHITDEIRRCIDEATASFDVALVEIGGTVGDIESLPFLEAIRQVRIERGAERTMFMHLTLVPYIAAAGELKTKPTQHSVKELRSIGIQPDVLLCRSEQVIPDSERRKIALFTNVSERAVIGCPDIDVLYGMPLELRRQGLDEIVIDQFKLSGTASLADLSEWEDVVDAIKHPLDEVTIAVVGKYVDYQDAYKSVGEALKHGGLRQRTKVNLKWVEAQDLEGSDMAALKDIDGILVPGGFGDRGFEGKVLASRYAREQRVPYFGICYGMQAAVVDYARHVAGLEGANSTENDRQSSHPVIALITEWRTTTGEVERRDEKSDLGGTMRLGLQEQRLKAGTLARELYGRDVVGERHRHRYEFNNRYRTQLEDAGLVIAAKSMDDTLVEMIELPREMHPWFLACQAHPEFLSTPRDGHPLFIGFVKASRARKAGGKLLREVCV.

The segment at 1–265 (MTPLIFVTGG…DEIVIDQFKL (265 aa)) is amidoligase domain. Residue Ser-13 participates in CTP binding. Ser-13 serves as a coordination point for UTP. Residues 14 to 19 (SLGKGI) and Asp-71 each bind ATP. Residues Asp-71 and Glu-139 each contribute to the Mg(2+) site. CTP is bound by residues 146–148 (DIE), 186–191 (KTKPTQ), and Lys-222. Residues 186–191 (KTKPTQ) and Lys-222 contribute to the UTP site. In terms of domain architecture, Glutamine amidotransferase type-1 spans 292-545 (TIAVVGKYVD…VKASRARKAG (254 aa)). Gly-353 contributes to the L-glutamine binding site. Cys-380 serves as the catalytic Nucleophile; for glutamine hydrolysis. L-glutamine is bound by residues 381 to 384 (YGMQ), Glu-404, and Arg-471. Residues His-518 and Glu-520 contribute to the active site.

The protein belongs to the CTP synthase family. In terms of assembly, homotetramer.

The enzyme catalyses UTP + L-glutamine + ATP + H2O = CTP + L-glutamate + ADP + phosphate + 2 H(+). The catalysed reaction is L-glutamine + H2O = L-glutamate + NH4(+). It catalyses the reaction UTP + NH4(+) + ATP = CTP + ADP + phosphate + 2 H(+). It participates in pyrimidine metabolism; CTP biosynthesis via de novo pathway; CTP from UDP: step 2/2. With respect to regulation, allosterically activated by GTP, when glutamine is the substrate; GTP has no effect on the reaction when ammonia is the substrate. The allosteric effector GTP functions by stabilizing the protein conformation that binds the tetrahedral intermediate(s) formed during glutamine hydrolysis. Inhibited by the product CTP, via allosteric rather than competitive inhibition. In terms of biological role, catalyzes the ATP-dependent amination of UTP to CTP with either L-glutamine or ammonia as the source of nitrogen. Regulates intracellular CTP levels through interactions with the four ribonucleotide triphosphates. The polypeptide is CTP synthase (Xylella fastidiosa (strain M23)).